The chain runs to 690 residues: Proprotein convertase subtilisin/kexin type 9 (690 aa).

An N-terminal signal peptide occupies residues 1 to 28 (MGTVRSRRLWWPLPLLLLLLLGPAGARA). Residues 29–150 (QEDDDGDYEE…IEEDSYVFAQ (122 aa)) constitute a propeptide that is removed on maturation. Tyr-36 carries the post-translational modification Sulfotyrosine. Ser-45 carries the post-translational modification Phosphoserine. The Inhibitor I9 domain occupies 75–147 (TYVVVLKEET…VDYIEEDSYV (73 aa)). Positions 153-459 (PWNLERITPA…GWQLFCRTVW (307 aa)) constitute a Peptidase S8 domain. Catalysis depends on charge relay system residues Asp-184 and His-224. Disulfide bonds link Cys-221/Cys-253 and Cys-321/Cys-356. Catalysis depends on Ser-384, which acts as the Charge relay system. The tract at residues 448–690 (GAGWQLFCRT…HLAQASQELQ (243 aa)) is C-terminal domain. Disulfide bonds link Cys-455-Cys-525, Cys-475-Cys-524, and Cys-484-Cys-507. The N-linked (GlcNAc...) asparagine glycan is linked to Asn-531. 6 disulfides stabilise this stretch: Cys-532-Cys-599, Cys-550-Cys-598, Cys-560-Cys-586, Cys-606-Cys-677, Cys-624-Cys-676, and Cys-633-Cys-652. Position 686 is a phosphoserine (Ser-686).

It belongs to the peptidase S8 family. In terms of assembly, monomer. Can self-associate to form dimers and higher multimers which may have increased LDLR degrading activity. The precursor protein but not the mature protein may form multimers. Interacts with APOB, VLDLR, LRP8/APOER2 and BACE1. The full-length immature form (pro-PCSK9) interacts with SCNN1A, SCNN1B and SCNN1G. The pro-PCSK9 form (via C-terminal domain) interacts with LDLR. Interacts (via the C-terminal domain) with ANXA2 (via repeat Annexin 1); the interaction inhibits the degradation of LDLR. Ca(2+) is required as a cofactor. Cleavage by furin and PCSK5 generates a truncated inactive protein that is unable to induce LDLR degradation. Post-translationally, undergoes autocatalytic cleavage in the endoplasmic reticulum to release the propeptide from the N-terminus and the cleavage of the propeptide is strictly required for its maturation and activation. The cleaved propeptide however remains associated with the catalytic domain through non-covalent interactions, preventing potential substrates from accessing its active site. As a result, it is secreted from cells as a propeptide-containing, enzymatically inactive protein. In terms of processing, phosphorylation protects the propeptide against proteolysis.

It localises to the cytoplasm. The protein localises to the secreted. Its subcellular location is the endosome. The protein resides in the lysosome. It is found in the cell surface. It localises to the endoplasmic reticulum. The protein localises to the golgi apparatus. Its activity is regulated as follows. Its proteolytic activity is autoinhibited by the non-covalent binding of the propeptide to the catalytic domain. Inhibited by EGTA. Crucial player in the regulation of plasma cholesterol homeostasis. Binds to low-density lipid receptor family members: low density lipoprotein receptor (LDLR), very low density lipoprotein receptor (VLDLR), apolipoprotein E receptor (LRP1/APOER) and apolipoprotein receptor 2 (LRP8/APOER2), and promotes their degradation in intracellular acidic compartments. Acts via a non-proteolytic mechanism to enhance the degradation of the hepatic LDLR through a clathrin LDLRAP1/ARH-mediated pathway. May prevent the recycling of LDLR from endosomes to the cell surface or direct it to lysosomes for degradation. Can induce ubiquitination of LDLR leading to its subsequent degradation. Inhibits intracellular degradation of APOB via the autophagosome/lysosome pathway in a LDLR-independent manner. Involved in the disposal of non-acetylated intermediates of BACE1 in the early secretory pathway. Inhibits epithelial Na(+) channel (ENaC)-mediated Na(+) absorption by reducing ENaC surface expression primarily by increasing its proteasomal degradation. Regulates neuronal apoptosis via modulation of LRP8/APOER2 levels and related anti-apoptotic signaling pathways. In Lagothrix lagotricha (Brown woolly monkey), this protein is Proprotein convertase subtilisin/kexin type 9 (PCSK9).